The chain runs to 95 residues: Corticostatin-3 (95 aa).

The first 19 residues, 1–19 (MRTLALLAAILLVALQAQA), serve as a signal peptide directing secretion. Positions 20-62 (EHVSVSIDEVVDQQPPQAEDQDVAIYVKEHESSALEALGVKAG) are excised as a propeptide. Disulfide bonds link Cys65-Cys93, Cys67-Cys82, and Cys72-Cys92.

It belongs to the alpha-defensin family.

The protein resides in the secreted. This peptide has antibiotic, anti-fungi and antiviral activity. It also inhibits corticotropin (ACTH) stimulated corticosterone production. The sequence is that of Corticostatin-3 from Oryctolagus cuniculus (Rabbit).